The sequence spans 1102 residues: Probable DNA-directed RNA polymerase (1102 aa).

Active-site residues include Asp734, Lys804, and Asp980.

The protein belongs to the phage and mitochondrial RNA polymerase family.

Its subcellular location is the mitochondrion. The catalysed reaction is RNA(n) + a ribonucleoside 5'-triphosphate = RNA(n+1) + diphosphate. Functionally, DNA-dependent RNA polymerase catalyzes the transcription of DNA into RNA using the four ribonucleoside triphosphates as substrates. This is Probable DNA-directed RNA polymerase from Agaricus bitorquis (Pavement mushroom).